The following is a 255-amino-acid chain: Proteasome subunit alpha type-3 (255 aa).

Residue Ser2 is modified to N-acetylserine. N6-acetyllysine occurs at positions 57, 206, and 230. Ser243 and Ser250 each carry phosphoserine.

Belongs to the peptidase T1A family. The 26S proteasome consists of a 20S proteasome core and two 19S regulatory subunits. The 20S proteasome core is a barrel-shaped complex made of 28 subunits that are arranged in four stacked rings. The two outer rings are each formed by seven alpha subunits, and the two inner rings are formed by seven beta subunits. The proteolytic activity is exerted by three beta-subunits PSMB5, PSMB6 and PSMB7. Interacts with AURKB. Interacts with CDKN1A. Interacts with MDM2 and RB1. Interacts with the C-terminus of TBXA2R isoform 2. Interacts with DNAJB2. Detected in liver (at protein level).

The protein localises to the cytoplasm. Its subcellular location is the nucleus. Functionally, component of the 20S core proteasome complex involved in the proteolytic degradation of most intracellular proteins. This complex plays numerous essential roles within the cell by associating with different regulatory particles. Associated with two 19S regulatory particles, forms the 26S proteasome and thus participates in the ATP-dependent degradation of ubiquitinated proteins. The 26S proteasome plays a key role in the maintenance of protein homeostasis by removing misfolded or damaged proteins that could impair cellular functions, and by removing proteins whose functions are no longer required. Associated with the PA200 or PA28, the 20S proteasome mediates ubiquitin-independent protein degradation. This type of proteolysis is required in several pathways including spermatogenesis (20S-PA200 complex) or generation of a subset of MHC class I-presented antigenic peptides (20S-PA28 complex). Binds to the C-terminus of CDKN1A and thereby mediates its degradation. Negatively regulates the membrane trafficking of the cell-surface thromboxane A2 receptor (TBXA2R) isoform 2. This Mus musculus (Mouse) protein is Proteasome subunit alpha type-3 (Psma3).